The sequence spans 440 residues: MSEFSQTVPELVAWARKNDFSITLPTERLAFLMAIATLNGERLDGEMSEGELVDAFRHVSKGFEQTTETVAVRANNAINDMVRQRLLNRFTSEMADGNAIYRLTPLGIGITDYYIRQREFSTLRLSMQLSIVAQELQRAAEAAEEGGDEFHWHRNVFAPLKYSVAEIFDSIDMTQRLMDEQQHSVKEDIAALLNQDWRAAIASCEMLLSETSGTLRELQDTLEAAGDKLQANLLRIQEATIGNAGLDLVDKLVFDLQSKLDRIISWGQQAIDLWIGYDRHVHKFIRTAIDMDKNRVFAQRLRQSVQNYFDNPWALTYANADRLLDMRDEELSLRSEEVTGELPPDLEFEEFNAIREQLAAMIEQALLVYQQQKLPLNLGEVMRDYLAQYPRARHFDVARILVDQAVRLGVAEADFSGLPAEWLAINDYGAKVQAHVINKY.

Residues 208–236 (LSETSGTLRELQDTLEAAGDKLQANLLRI) form a leucine-zipper region.

The protein belongs to the MukF family. Interacts, and probably forms a ternary complex, with MukE and MukB via its C-terminal region. The complex formation is stimulated by calcium or magnesium. It is required for an interaction between MukE and MukB.

Its subcellular location is the cytoplasm. The protein resides in the nucleoid. Involved in chromosome condensation, segregation and cell cycle progression. May participate in facilitating chromosome segregation by condensation DNA from both sides of a centrally located replisome during cell division. Not required for mini-F plasmid partitioning. Probably acts via its interaction with MukB and MukE. Overexpression results in anucleate cells. It has a calcium binding activity. In Yersinia enterocolitica serotype O:8 / biotype 1B (strain NCTC 13174 / 8081), this protein is Chromosome partition protein MukF.